The sequence spans 420 residues: Ribosome biogenesis protein WDR12 homolog (420 aa).

The tract at residues 10-92 (VQVHLKTKQE…EDAIEIEYVE (83 aa)) is ubiquitin-like (UBL) domain. WD repeat units follow at residues 104-142 (LHDD…LTIS), 143-185 (GHTA…NSVE), 192-231 (GHER…AAEG), 250-288 (GHRE…IKTE), 290-329 (STNK…GSVV), 335-375 (GHNA…APLY), and 379-417 (GHGE…AEDT).

Belongs to the WD repeat WDR12/YTM1 family.

The protein localises to the nucleus. It localises to the nucleolus. Its subcellular location is the nucleoplasm. Its function is as follows. Required for maturation of ribosomal RNAs and formation of the large ribosomal subunit. The sequence is that of Ribosome biogenesis protein WDR12 homolog from Drosophila erecta (Fruit fly).